Consider the following 465-residue polypeptide: Flavin-containing monooxygenase FMO GS-OX-like 2 (465 aa).

18 to 23 (GAGAAG) provides a ligand contact to FAD. 217 to 222 (GSSASG) provides a ligand contact to NADP(+).

It belongs to the FMO family. The cofactor is FAD.

In terms of biological role, catalyzes the conversion of methylthioalkyl glucosinolates of any chain length into methylsulfinylalkyl glucosinolates. The chain is Flavin-containing monooxygenase FMO GS-OX-like 2 from Arabidopsis thaliana (Mouse-ear cress).